Consider the following 58-residue polypeptide: DNA-directed RNA polymerases I, II, and III subunit RPABC4 (58 aa).

Residues Cys-19, Cys-22, Cys-36, and Cys-39 each coordinate Zn(2+). A C4-type zinc finger spans residues 19–39 (CGECHTENEIKSRDPIRCREC).

Belongs to the archaeal Rpo12/eukaryotic RPC10 RNA polymerase subunit family. Component of the RNA polymerase I (Pol I), RNA polymerase II (Pol II) and RNA polymerase III (Pol III) complexes consisting of at least 13, 12 and 17 subunits, respectively. Pol I complex consists of a ten-subunit catalytic core composed of POLR1A/RPA1, POLR1B/RPA2, POLR1C/RPAC1, POLR1D/RPAC2, POLR1H/RPA12, POLR2E/RPABC1, POLR2F/RPABC2, POLR2H/RPABC3, POLR2K/RPABC4 and POLR2L/RPABC5; a mobile stalk subunit POLR1F/RPA43 protruding from the core and additional subunits homologous to general transcription factors POLR1E/RPA49 and POLR1G/RPA34. Part of Pol I pre-initiation complex (PIC), in which Pol I core assembles with RRN3 and promoter-bound UTBF and SL1/TIF-IB complex. Pol II complex contains a ten-subunit catalytic core composed of POLR2A/RPB1, POLR2B/RPB2, POLR2C/RPB3, POLR2I/RPB9, POLR2J/RPB11, POLR2E/RPABC1, POLR2F/RPABC2, POLR2H/RPABC3, POLR2K/RPABC4 and POLR2L/RPABC5 and a mobile stalk composed of two subunits POLR2D/RPB4 and POLR2G/RPB7. Part of Pol II(G) complex, in which Pol II core associates with an additional subunit POLR2M; unlike conventional Pol II, Pol II(G) functions as a transcriptional repressor. Part of TBP-based Pol II pre-initiation complex (PIC), in which Pol II core assembles with general transcription factors and other specific initiation factors including GTF2E1, GTF2E2, GTF2F1, GTF2F2, TCEA1, ERCC2, ERCC3, GTF2H2, GTF2H3, GTF2H4, GTF2H5, GTF2A1, GTF2A2, GTF2B and TBP; this large multi-subunit PIC complex mediates DNA unwinding and targets Pol II core to the transcription start site where the first phosphodiester bond forms. Pol III complex consists of a ten-subunit catalytic core composed of POLR3A/RPC1, POLR3B/RPC2, POLR1C/RPAC1, POLR1D/RPAC2, POLR3K/RPC10, POLR2E/RPABC1, POLR2F/RPABC2, POLR2H/RPABC3, POLR2K/RPABC4 and POLR2L/RPABC5; a mobile stalk composed of two subunits POLR3H/RPC8 and CRCP/RPC9, protruding from the core and functioning primarily in transcription initiation; and additional subunits homologous to general transcription factors of the RNA polymerase II machinery, POLR3C/RPC3-POLR3F/RPC6-POLR3G/RPC7 heterotrimer required for transcription initiation and POLR3D/RPC4-POLR3E/RPC5 heterodimer involved in both transcription initiation and termination.

The protein localises to the nucleus. Its subcellular location is the nucleolus. In terms of biological role, DNA-dependent RNA polymerase catalyzes the transcription of DNA into RNA using the four ribonucleoside triphosphates as substrates. Common component of RNA polymerases I, II and III which synthesize ribosomal RNA precursors, mRNA precursors and many functional non-coding RNAs, and a small RNAs, such as 5S rRNA and tRNAs, respectively. The chain is DNA-directed RNA polymerases I, II, and III subunit RPABC4 (Polr2k) from Mus musculus (Mouse).